A 476-amino-acid chain; its full sequence is MITDPLKTVHVVGGGLAGSEAAWQIAQAGVRVVLHEMRPARMTEAHRTEGLAELVCSNSFRSDDAANNAVGLLHAEMRKLGSLVMRAADANQVPAGGALAVDRDGFSAAVTKALAEHPLIELQRGELDGLPPSDWGHVVIATGPLTSAPLASAIQALTGEDSLAFFDAIAPIVHRDSIDMSVAWFQSRYDKVGPGGNGADYINCPMTREQYEGFVAALISGDKVDFKDWETNTPYFDGCLPIEVMAERGAETLRFGPMKPVGLTNPKDPTVKPYAIVQLRQDNKLGTLYNLVGFQTKLKHGEQSRIFRSIPGLENAEFARLGGLHRNTFLNSPKLLDQQLRLRAEPRLRFAGQMTGCEGYVESASIGLIAGLYAAAEARDIALAPPPSTTALGALLGHITGGHIETIDAGPRSFQPMNVNFGLFPPLESPPTHGADGKKLRGPDKTVAKKQALSARALADLDGWIAENLPGAAAAA.

Gly13 to Gly18 is a binding site for FAD. Residues Pro425–Thr446 are disordered. The span at Ala435–Thr446 shows a compositional bias: basic and acidic residues.

This sequence belongs to the MnmG family. TrmFO subfamily. FAD serves as cofactor.

It is found in the cytoplasm. It carries out the reaction uridine(54) in tRNA + (6R)-5,10-methylene-5,6,7,8-tetrahydrofolate + NADH + H(+) = 5-methyluridine(54) in tRNA + (6S)-5,6,7,8-tetrahydrofolate + NAD(+). It catalyses the reaction uridine(54) in tRNA + (6R)-5,10-methylene-5,6,7,8-tetrahydrofolate + NADPH + H(+) = 5-methyluridine(54) in tRNA + (6S)-5,6,7,8-tetrahydrofolate + NADP(+). Functionally, catalyzes the folate-dependent formation of 5-methyl-uridine at position 54 (M-5-U54) in all tRNAs. This chain is Methylenetetrahydrofolate--tRNA-(uracil-5-)-methyltransferase TrmFO, found in Rhodopseudomonas palustris (strain BisB18).